Consider the following 77-residue polypeptide: Pi-stichotoxin-Hmg5a (77 aa).

The first 21 residues, 1–21, serve as a signal peptide directing secretion; the sequence is MDYQRLLFLFAVAMVITTTVA. Positions 22 to 34 are excised as a propeptide; it reads LPQDTALMDGQLQ. Cystine bridges form between Cys-40-Cys-73, Cys-42-Cys-66, and Cys-56-Cys-74.

It belongs to the sea anemone type 3 (BDS) potassium channel toxin family.

The protein resides in the secreted. It is found in the nematocyst. Its function is as follows. Toxin that inhibits rat ASIC3 channels (IC(50)=13.8 uM). Also able to bind T.californica muscle-type nicotinic acetylcholine receptors (nAChR), and human alpha-7/CHRNA7 nicotinic acetylcholine receptors. This Heteractis magnifica (Magnificent sea anemone) protein is Pi-stichotoxin-Hmg5a.